Consider the following 371-residue polypeptide: Flagellar P-ring protein (371 aa).

An N-terminal signal peptide occupies residues 1–28; the sequence is MPARPTPPAVPLALALAAALAAPAPAAA.

The protein belongs to the FlgI family. In terms of assembly, the basal body constitutes a major portion of the flagellar organelle and consists of four rings (L,P,S, and M) mounted on a central rod.

It localises to the periplasm. The protein resides in the bacterial flagellum basal body. Assembles around the rod to form the L-ring and probably protects the motor/basal body from shearing forces during rotation. The protein is Flagellar P-ring protein of Anaeromyxobacter dehalogenans (strain 2CP-C).